The primary structure comprises 350 residues: Protein O-mannose kinase (350 aa).

M1 carries the N-acetylmethionine modification. The Cytoplasmic segment spans residues 1–20; that stretch reads MEKQPQNKRRGLAPREVPPA. The helical; Signal-anchor for type II membrane protein transmembrane segment at 21-43 threads the bilayer; it reads VGLLLIMALMNTLLYLCLDHFFI. Residues 44–350 lie on the Lumenal side of the membrane; the sequence is APRQSIVDPR…AVMSQAREML (307 aa). Positions 81 to 350 constitute a Protein kinase domain; it reads VRQLKRVGEG…AVMSQAREML (270 aa). N-linked (GlcNAc...) asparagine glycans are attached at residues N165, N220, and N235.

This sequence belongs to the protein kinase superfamily. Ser/Thr protein kinase family. STKL subfamily.

It is found in the endoplasmic reticulum membrane. It catalyses the reaction 3-O-[beta-D-GalNAc-(1-&gt;3)-beta-D-GlcNAc-(1-&gt;4)-alpha-D-Man]-L-Thr-[protein] + ATP = 3-O-[beta-D-GalNAc-(1-&gt;3)-beta-D-GlcNAc-(1-&gt;4)-(O-6-P-alpha-D-Man)]-Thr-[protein] + ADP + H(+). Protein O-mannose kinase that specifically mediates phosphorylation at the 6-position of an O-mannose of the trisaccharide (N-acetylgalactosamine (GalNAc)-beta-1,3-N-acetylglucosamine (GlcNAc)-beta-1,4-mannose) to generate phosphorylated O-mannosyl trisaccharide (N-acetylgalactosamine-beta-1,3-N-acetylglucosamine-beta-1,4-(phosphate-6-)mannose). Phosphorylated O-mannosyl trisaccharide is a carbohydrate structure present in alpha-dystroglycan (DAG1), which is required for binding laminin G-like domain-containing extracellular proteins with high affinity. Only shows kinase activity when the GalNAc-beta-3-GlcNAc-beta-terminus is linked to the 4-position of O-mannose, suggesting that this disaccharide serves as the substrate recognition motif. This Macaca fascicularis (Crab-eating macaque) protein is Protein O-mannose kinase (POMK).